A 162-amino-acid chain; its full sequence is NADH-quinone oxidoreductase subunit I (162 aa).

4Fe-4S ferredoxin-type domains follow at residues L53–E83 and T93–N122. C63, C66, C69, C73, C102, C105, C108, and C112 together coordinate [4Fe-4S] cluster.

It belongs to the complex I 23 kDa subunit family. NDH-1 is composed of 14 different subunits. Subunits NuoA, H, J, K, L, M, N constitute the membrane sector of the complex. [4Fe-4S] cluster serves as cofactor.

It localises to the cell inner membrane. It carries out the reaction a quinone + NADH + 5 H(+)(in) = a quinol + NAD(+) + 4 H(+)(out). Its function is as follows. NDH-1 shuttles electrons from NADH, via FMN and iron-sulfur (Fe-S) centers, to quinones in the respiratory chain. The immediate electron acceptor for the enzyme in this species is believed to be ubiquinone. Couples the redox reaction to proton translocation (for every two electrons transferred, four hydrogen ions are translocated across the cytoplasmic membrane), and thus conserves the redox energy in a proton gradient. This chain is NADH-quinone oxidoreductase subunit I, found in Maricaulis maris (strain MCS10) (Caulobacter maris).